The chain runs to 198 residues: Methyl-coenzyme M reductase operon protein C (198 aa).

As to quaternary structure, MCR is composed of three subunits: alpha, beta, and gamma. The function of proteins C and D is not known.

This chain is Methyl-coenzyme M reductase operon protein C (mcrC), found in Methanococcus vannielii.